Here is a 330-residue protein sequence, read N- to C-terminus: MNSALPEDVKNLLTELETFLLDVLKAETLSKKGKEKKEILIKRLKDIKHSYPQEFQDKAEDDDQEENDGFPLPPDAVSLASDRDKDEDLPYDGSFYPPVAAQDLEYLKAGYLEKRRKDHSFFASEWQKRWCVFTNSLFYYYGSDKDKQQKGAFSLDGYRAKMNDTLRKDAKKDCCFEIFAPDKRVYQFAASSPKEAEEWINAIMNSRGIIATEDEELYDDVNQEIDASLEEDIYEELPEESEKPVTETETQKATPVPVNNTSGKENTDYANFYRGLWDCTGDHPDELSFKHGDTIYIISKEYNTYGWWVGEMKGTIGLVPKAYIIEMYDI.

The segment at 57 to 84 is disordered; sequence DKAEDDDQEENDGFPLPPDAVSLASDRD. Over residues 59-68 the composition is skewed to acidic residues; it reads AEDDDQEEND. A PH domain is found at 105-208; sequence EYLKAGYLEK…WINAIMNSRG (104 aa). The segment at 236-261 is disordered; sequence ELPEESEKPVTETETQKATPVPVNNT. The span at 240 to 250 shows a compositional bias: basic and acidic residues; the sequence is ESEKPVTETET. Residues 251–261 are compositionally biased toward polar residues; sequence QKATPVPVNNT. An SH3 domain is found at 268 to 329; sequence DYANFYRGLW…PKAYIIEMYD (62 aa).

The protein belongs to the SKAP family. In terms of processing, phosphorylated on tyrosines.

It localises to the cytoplasm. Its function is as follows. May be involved in B-cell and macrophage adhesion processes. May play a role in src signaling pathway. The polypeptide is Src kinase-associated phosphoprotein 2-B (skap2-b) (Xenopus laevis (African clawed frog)).